The following is a 364-amino-acid chain: Chorismate synthase (364 aa).

Arg47 contacts NADP(+). FMN-binding positions include 125-127 (RFS), Gly285, 300-304 (KPTPS), and Arg327.

Belongs to the chorismate synthase family. As to quaternary structure, homotetramer. FMNH2 serves as cofactor.

The enzyme catalyses 5-O-(1-carboxyvinyl)-3-phosphoshikimate = chorismate + phosphate. The protein operates within metabolic intermediate biosynthesis; chorismate biosynthesis; chorismate from D-erythrose 4-phosphate and phosphoenolpyruvate: step 7/7. Catalyzes the anti-1,4-elimination of the C-3 phosphate and the C-6 proR hydrogen from 5-enolpyruvylshikimate-3-phosphate (EPSP) to yield chorismate, which is the branch point compound that serves as the starting substrate for the three terminal pathways of aromatic amino acid biosynthesis. This reaction introduces a second double bond into the aromatic ring system. The chain is Chorismate synthase from Dehalococcoides mccartyi (strain ATCC BAA-2100 / JCM 16839 / KCTC 5957 / BAV1).